Here is a 119-residue protein sequence, read N- to C-terminus: Integration host factor subunit alpha (119 aa).

Residues 96 to 119 (INGQQANGKMNGESAPSEFSAETE) are disordered.

Belongs to the bacterial histone-like protein family. As to quaternary structure, heterodimer of an alpha and a beta chain.

Its function is as follows. This protein is one of the two subunits of integration host factor, a specific DNA-binding protein that functions in genetic recombination as well as in transcriptional and translational control. The sequence is that of Integration host factor subunit alpha from Bradyrhizobium sp. (strain ORS 278).